We begin with the raw amino-acid sequence, 287 residues long: Large ribosomal subunit protein uL2 (287 aa).

The interval 203–287 (LSAGKAGRNR…SKRGRGGRES (85 aa)) is disordered. Basic residues-rich tracts occupy residues 209 to 220 (GRNRWKGRRPKV) and 258 to 287 (KTRKPKKASSKLIIRRRRKSSKRGRGGRES).

This sequence belongs to the universal ribosomal protein uL2 family. In terms of assembly, part of the 50S ribosomal subunit. Forms a bridge to the 30S subunit in the 70S ribosome.

Its function is as follows. One of the primary rRNA binding proteins. Required for association of the 30S and 50S subunits to form the 70S ribosome, for tRNA binding and peptide bond formation. It has been suggested to have peptidyltransferase activity; this is somewhat controversial. Makes several contacts with the 16S rRNA in the 70S ribosome. This Nostoc sp. (strain PCC 7120 / SAG 25.82 / UTEX 2576) protein is Large ribosomal subunit protein uL2.